A 112-amino-acid chain; its full sequence is U-scoloptoxin(16)-Er5a (112 aa).

The first 26 residues, 1–26 (MNTVSVVQFLAVGCAVFVLYGRGVFA), serve as a signal peptide directing secretion.

Belongs to the scoloptoxin-16 family. In terms of processing, contains 2 disulfide bonds. In terms of tissue distribution, expressed by the venom gland.

The protein resides in the secreted. The sequence is that of U-scoloptoxin(16)-Er5a from Ethmostigmus rubripes (Giant centipede).